The primary structure comprises 341 residues: Hyaluronan and proteoglycan link protein 2 (341 aa).

The N-terminal stretch at 1-27 (MPSRIPLPAFCCFLLPWAFTSFHKALG) is a signal peptide. Residues 35-143 (PHYLLPPIHE…GIEDESVALT (109 aa)) form the Ig-like V-type domain. 5 disulfide bridges follow: cysteine 58–cysteine 129, cysteine 171–cysteine 241, cysteine 195–cysteine 216, cysteine 266–cysteine 337, and cysteine 291–cysteine 312. Link domains lie at 149–243 (VVFP…FCFT) and 246–339 (LAGQ…YCYA).

This sequence belongs to the HAPLN family. In terms of tissue distribution, brain. Predominantly expressed by neurons. Colocalizes with versican V2 in developing and adult cerebellar white matter and at the nodes of Ranvier.

It localises to the secreted. Its subcellular location is the extracellular space. The protein localises to the extracellular matrix. In terms of biological role, mediates a firm binding of versican V2 to hyaluronic acid. May play a pivotal role in the formation of the hyaluronan-associated matrix in the central nervous system (CNS) which facilitates neuronal conduction and general structural stabilization. Binds to hyaluronic acid. In Mus musculus (Mouse), this protein is Hyaluronan and proteoglycan link protein 2 (Hapln2).